Consider the following 476-residue polypeptide: Aspartate kinase Ask_Ect (476 aa).

Residues 405–476 (SAIGSDLKVK…ENHGDVIAAA (72 aa)) enclose the ACT domain.

This sequence belongs to the aspartokinase family. Monomer.

Its subcellular location is the cytoplasm. The catalysed reaction is L-aspartate + ATP = 4-phospho-L-aspartate + ADP. It functions in the pathway amine and polyamine biosynthesis; ectoine biosynthesis. Its activity is regulated as follows. Allosterically and strongly feedback inhibited by tryptophan. The presence of either 650 mM NaCl or KCl reduces the inhibition by tryptophan. Involved in the biosynthesis of L-aspartate-beta-semialdehyde, which is an intermediate in the biosynthesis of ectoine, a highly soluble organic osmolyte, called compatible solute. Ectoine is used to avoid excessive water efflux, plasmolysis, molecular crowding of the cytoplasm, and cessation of growth in high salinity environments. Catalyzes the phosphorylation of the beta-carboxyl group of L-aspartate to yield 4-phospho-L-aspartate. In Stutzerimonas stutzeri (strain A1501) (Pseudomonas stutzeri), this protein is Aspartate kinase Ask_Ect (ask).